A 158-amino-acid polypeptide reads, in one-letter code: NAD(P)H-quinone oxidoreductase subunit J, chloroplastic (158 aa).

It belongs to the complex I 30 kDa subunit family. NDH is composed of at least 16 different subunits, 5 of which are encoded in the nucleus.

The protein localises to the plastid. The protein resides in the chloroplast thylakoid membrane. It carries out the reaction a plastoquinone + NADH + (n+1) H(+)(in) = a plastoquinol + NAD(+) + n H(+)(out). The enzyme catalyses a plastoquinone + NADPH + (n+1) H(+)(in) = a plastoquinol + NADP(+) + n H(+)(out). NDH shuttles electrons from NAD(P)H:plastoquinone, via FMN and iron-sulfur (Fe-S) centers, to quinones in the photosynthetic chain and possibly in a chloroplast respiratory chain. The immediate electron acceptor for the enzyme in this species is believed to be plastoquinone. Couples the redox reaction to proton translocation, and thus conserves the redox energy in a proton gradient. This chain is NAD(P)H-quinone oxidoreductase subunit J, chloroplastic, found in Solanum lycopersicum (Tomato).